We begin with the raw amino-acid sequence, 1091 residues long: Error-prone DNA polymerase 1 (1091 aa).

The span at 1051–1064 (RGDEFHHGMPDDHR) shows a compositional bias: basic and acidic residues. The disordered stretch occupies residues 1051–1080 (RGDEFHHGMPDDHRAIRKRPPPSNHDDDEV).

The protein belongs to the DNA polymerase type-C family. DnaE2 subfamily.

The protein localises to the cytoplasm. It carries out the reaction DNA(n) + a 2'-deoxyribonucleoside 5'-triphosphate = DNA(n+1) + diphosphate. Its function is as follows. DNA polymerase involved in damage-induced mutagenesis and translesion synthesis (TLS). It is not the major replicative DNA polymerase. The protein is Error-prone DNA polymerase 1 of Agrobacterium fabrum (strain C58 / ATCC 33970) (Agrobacterium tumefaciens (strain C58)).